Consider the following 479-residue polypeptide: MVENKSKVKDISLAPFGKMQMEISENEMPGLMRIREEYGKDQPLKNAKITGCLHMTVECALLIETLQKLGAQIRWCSCNIYSTADYAAAAVSTLENVTVFAWKNETLEEYWWCVESALTWGDGDDNGPDMIVDDGGDATLLVHKGVEYEKLYEEKNILPDPEKAKNEEERCFLTLLKNSILKNPKKWTNIAKKIIGVSEETTTGVLRLKKMDKQNELLFTAINVNDAVTKQKYDNVYGCRHSLPDGLMRATDFLISGKIVVICGYGDVGKGCASSMKGLGARVYITEIDPICAIQAVMEGFNVVTLDEIVDKGDFFITCTGNVDVIKLEHLLKMKNNAVVGNIGHFDDEIQVNELFNYKGIHIENVKPQVDRITLPNGNKIIVLARGRLLNLGCATGHPAFVMSFSFCNQTFAQLDLWQNKDTNKYENKVYLLPKHLDEKVALYHLKKLNASLTELDDNQCQFLGVNKSGPFKSNEYRY.

Positions 56, 134, and 200 each coordinate substrate. 201 to 203 (TTT) is an NAD(+) binding site. The substrate site is built by K230 and D234. Residues N235, 264–269 (GYGDVG), E287, N322, 343–345 (IGH), and N391 each bind NAD(+).

This sequence belongs to the adenosylhomocysteinase family. As to quaternary structure, homotetramer. Requires NAD(+) as cofactor.

It carries out the reaction S-adenosyl-L-homocysteine + H2O = L-homocysteine + adenosine. It participates in amino-acid biosynthesis; L-homocysteine biosynthesis; L-homocysteine from S-adenosyl-L-homocysteine: step 1/1. Adenosylhomocysteine is a competitive inhibitor of S-adenosyl-L-methionine-dependent methyl transferase reactions; therefore adenosylhomocysteinase may play a key role in the control of methylations via regulation of the intracellular concentration of adenosylhomocysteine. The polypeptide is Adenosylhomocysteinase (Plasmodium falciparum (isolate 3D7)).